The sequence spans 492 residues: 3-octaprenyl-4-hydroxybenzoate carboxy-lyase (492 aa).

Asn175 contributes to the Mn(2+) binding site. Prenylated FMN is bound by residues 178–180, 192–194, and 197–198; these read IYR, RWL, and RG. Glu241 serves as a coordination point for Mn(2+). Asp290 (proton donor) is an active-site residue.

The protein belongs to the UbiD family. In terms of assembly, homohexamer. Prenylated FMN serves as cofactor. Requires Mn(2+) as cofactor.

It localises to the cell membrane. It catalyses the reaction a 4-hydroxy-3-(all-trans-polyprenyl)benzoate + H(+) = a 2-(all-trans-polyprenyl)phenol + CO2. Its pathway is cofactor biosynthesis; ubiquinone biosynthesis. Catalyzes the decarboxylation of 3-octaprenyl-4-hydroxy benzoate to 2-octaprenylphenol, an intermediate step in ubiquinone biosynthesis. In Salmonella choleraesuis (strain SC-B67), this protein is 3-octaprenyl-4-hydroxybenzoate carboxy-lyase.